Here is an 840-residue protein sequence, read N- to C-terminus: SLIT and NTRK-like protein 6 (840 aa).

The signal sequence occupies residues 1 to 18 (MKLWTYLLYPSLLACLSL). An LRRNT 1 domain is found at 22–67 (SPMPSVRGSCDTLCNCEEKDGIMIINCEEKGINKLSQISVPPSRPF). Over 23-609 (PMPSVRGSCD…LTDAVPLSVL (587 aa)) the chain is Extracellular. LRR repeat units lie at residues 89 to 110 (NALS…AFNG), 113 to 134 (LLKQ…TFHG), 137 to 158 (NLEF…AFSK), 161 to 182 (RLKV…IFRF), and 184 to 205 (PLTH…GFLE). The 52-residue stretch at 218-269 (NKWACNCELLQLKNWLENMPPQSIIGDVICYSPPPFKGSVLSRLKKESFCPT) folds into the LRRCT 1 domain. One can recognise an LRRNT 2 domain in the interval 319–360 (PSTQLPVPYCPIPCNCKVLSPSGLLIHCQERNIESLSDLQPP). LRR repeat units follow at residues 363-384 (NPRK…DLTD), 387-408 (TLEM…SFMN), 411-432 (RLQK…MFLG), 435-456 (SLEY…TFNP), 459-480 (KLKV…IFLG), and 482-503 (PLTR…NILD). The 52-residue stretch at 516 to 567 (NPWDCSCDLVGLQQWIHKLGKGTMTDDILCTSPGHLDKKELKALNSDLLCPG) folds into the LRRCT 2 domain. The chain crosses the membrane as a helical span at residues 610 to 630 (ILGLLIVFITIVFCAAGIVVF). At 631–840 (VLHRRRRYKK…DYLEVLEQQT (210 aa)) the chain is on the cytoplasmic side. Basic and acidic residues predominate over residues 717-726 (QRSLLERENH). Residues 717-736 (QRSLLERENHSPLTGSNMKY) are disordered. Polar residues predominate over residues 727–736 (SPLTGSNMKY).

This sequence belongs to the SLITRK family. In the embryo, expressed in otic cyst, lateral trunk epidermis and underlying mesodermal tissue, limb bud, maxillary process, cochlea, retina, tongue, tooth primordium, central nervous system, and primordia of visceral organs including lung, gastrointestinal tract and pancreas. In the central nervous system, expressed primarily in dorsal thalamus, cerebellum and medulla.

Its subcellular location is the cell membrane. Its function is as follows. Regulator of neurite outgrowth required for normal hearing and vision. The chain is SLIT and NTRK-like protein 6 (Slitrk6) from Mus musculus (Mouse).